The chain runs to 299 residues: 4-hydroxy-3-methylbut-2-enyl diphosphate reductase (299 aa).

C12 provides a ligand contact to [4Fe-4S] cluster. Positions 42 and 88 each coordinate (2E)-4-hydroxy-3-methylbut-2-enyl diphosphate. The dimethylallyl diphosphate site is built by H42 and H88. 2 residues coordinate isopentenyl diphosphate: H42 and H88. C110 lines the [4Fe-4S] cluster pocket. H138 is a (2E)-4-hydroxy-3-methylbut-2-enyl diphosphate binding site. H138 contacts dimethylallyl diphosphate. H138 is a binding site for isopentenyl diphosphate. E140 acts as the Proton donor in catalysis. Residue T177 participates in (2E)-4-hydroxy-3-methylbut-2-enyl diphosphate binding. A [4Fe-4S] cluster-binding site is contributed by C205. The (2E)-4-hydroxy-3-methylbut-2-enyl diphosphate site is built by S233, N235, and S277. The dimethylallyl diphosphate site is built by S233, N235, and S277. The isopentenyl diphosphate site is built by S233, N235, and S277.

It belongs to the IspH family. Requires [4Fe-4S] cluster as cofactor.

The enzyme catalyses isopentenyl diphosphate + 2 oxidized [2Fe-2S]-[ferredoxin] + H2O = (2E)-4-hydroxy-3-methylbut-2-enyl diphosphate + 2 reduced [2Fe-2S]-[ferredoxin] + 2 H(+). It carries out the reaction dimethylallyl diphosphate + 2 oxidized [2Fe-2S]-[ferredoxin] + H2O = (2E)-4-hydroxy-3-methylbut-2-enyl diphosphate + 2 reduced [2Fe-2S]-[ferredoxin] + 2 H(+). It participates in isoprenoid biosynthesis; dimethylallyl diphosphate biosynthesis; dimethylallyl diphosphate from (2E)-4-hydroxy-3-methylbutenyl diphosphate: step 1/1. It functions in the pathway isoprenoid biosynthesis; isopentenyl diphosphate biosynthesis via DXP pathway; isopentenyl diphosphate from 1-deoxy-D-xylulose 5-phosphate: step 6/6. Functionally, catalyzes the conversion of 1-hydroxy-2-methyl-2-(E)-butenyl 4-diphosphate (HMBPP) into a mixture of isopentenyl diphosphate (IPP) and dimethylallyl diphosphate (DMAPP). Acts in the terminal step of the DOXP/MEP pathway for isoprenoid precursor biosynthesis. This chain is 4-hydroxy-3-methylbut-2-enyl diphosphate reductase, found in Malacoplasma penetrans (strain HF-2) (Mycoplasma penetrans).